The primary structure comprises 257 residues: Imidazole glycerol phosphate synthase subunit HisF (257 aa).

Catalysis depends on residues Asp-11 and Asp-130.

Belongs to the HisA/HisF family. Heterodimer of HisH and HisF.

It localises to the cytoplasm. The catalysed reaction is 5-[(5-phospho-1-deoxy-D-ribulos-1-ylimino)methylamino]-1-(5-phospho-beta-D-ribosyl)imidazole-4-carboxamide + L-glutamine = D-erythro-1-(imidazol-4-yl)glycerol 3-phosphate + 5-amino-1-(5-phospho-beta-D-ribosyl)imidazole-4-carboxamide + L-glutamate + H(+). The protein operates within amino-acid biosynthesis; L-histidine biosynthesis; L-histidine from 5-phospho-alpha-D-ribose 1-diphosphate: step 5/9. In terms of biological role, IGPS catalyzes the conversion of PRFAR and glutamine to IGP, AICAR and glutamate. The HisF subunit catalyzes the cyclization activity that produces IGP and AICAR from PRFAR using the ammonia provided by the HisH subunit. The protein is Imidazole glycerol phosphate synthase subunit HisF of Shewanella halifaxensis (strain HAW-EB4).